The primary structure comprises 81 residues: 2,3-bisphosphoglycerate-independent phosphoglycerate mutase (81 aa).

Residue serine 14 is the Phosphoserine intermediate of the active site. Residue serine 14 coordinates Mn(2+). A substrate-binding site is contributed by histidine 75.

The protein belongs to the BPG-independent phosphoglycerate mutase family. Monomer. Mn(2+) is required as a cofactor.

The enzyme catalyses (2R)-2-phosphoglycerate = (2R)-3-phosphoglycerate. The protein operates within carbohydrate degradation; glycolysis; pyruvate from D-glyceraldehyde 3-phosphate: step 3/5. Functionally, catalyzes the interconversion of 2-phosphoglycerate and 3-phosphoglycerate. This chain is 2,3-bisphosphoglycerate-independent phosphoglycerate mutase (gpmI), found in Tomato big bud phytoplasma.